A 92-amino-acid polypeptide reads, in one-letter code: Small ribosomal subunit protein uS19 (92 aa).

It belongs to the universal ribosomal protein uS19 family.

In terms of biological role, protein S19 forms a complex with S13 that binds strongly to the 16S ribosomal RNA. The protein is Small ribosomal subunit protein uS19 of Methylocella silvestris (strain DSM 15510 / CIP 108128 / LMG 27833 / NCIMB 13906 / BL2).